A 218-amino-acid chain; its full sequence is Thiopurine S-methyltransferase (218 aa).

The S-adenosyl-L-methionine site is built by tryptophan 10, leucine 45, glutamate 66, and arginine 123.

This sequence belongs to the class I-like SAM-binding methyltransferase superfamily. TPMT family.

Its subcellular location is the cytoplasm. It catalyses the reaction S-adenosyl-L-methionine + a thiopurine = S-adenosyl-L-homocysteine + a thiopurine S-methylether.. This chain is Thiopurine S-methyltransferase, found in Shewanella sp. (strain MR-7).